Reading from the N-terminus, the 259-residue chain is Phosphatidylglycerol--prolipoprotein diacylglyceryl transferase (259 aa).

A run of 4 helical transmembrane segments spans residues 12–32 (LSLHWYAVCILVGLLLAVYLA), 46–66 (IIDFILIAFPLAIIGARIYYV), 83–103 (IWNGGIAIYGGLITGTIVLFV), and 109–129 (VLNPIHFLDIAAPSVMLAQAI). Arg-131 is a binding site for a 1,2-diacyl-sn-glycero-3-phospho-(1'-sn-glycerol). A run of 3 helical transmembrane segments spans residues 167 to 187 (VPTFLYESMWNLIGFVIIMVW), 194 to 214 (LLDGDIISFYLIWYGCGRLVI), and 226 to 246 (GIRVSQYVSVLLIIIAIVFIF).

This sequence belongs to the Lgt family.

It is found in the cell membrane. It carries out the reaction L-cysteinyl-[prolipoprotein] + a 1,2-diacyl-sn-glycero-3-phospho-(1'-sn-glycerol) = an S-1,2-diacyl-sn-glyceryl-L-cysteinyl-[prolipoprotein] + sn-glycerol 1-phosphate + H(+). The protein operates within protein modification; lipoprotein biosynthesis (diacylglyceryl transfer). Functionally, catalyzes the transfer of the diacylglyceryl group from phosphatidylglycerol to the sulfhydryl group of the N-terminal cysteine of a prolipoprotein, the first step in the formation of mature lipoproteins. The chain is Phosphatidylglycerol--prolipoprotein diacylglyceryl transferase from Streptococcus equi subsp. zooepidemicus (strain H70).